Here is a 357-residue protein sequence, read N- to C-terminus: Mitochondrial carrier protein LEU5 (357 aa).

6 helical membrane passes run 31–47 (DYIV…GSCA), 103–119 (LRIF…YEQI), 136–153 (LVSG…TYPL), 208–228 (VPTV…HDLL), 269–285 (ISGG…AYPF), and 325–347 (GFFV…SFFV). Solcar repeat units lie at residues 31-122 (DYIV…IRNT), 130-231 (ESHW…LHDV), and 262-354 (LRTW…MKWN).

This sequence belongs to the mitochondrial carrier (TC 2.A.29) family.

The protein localises to the mitochondrion inner membrane. Functionally, required for the accumulation of coenzyme A in the mitochondrial matrix. The chain is Mitochondrial carrier protein LEU5 (LEU5) from Saccharomyces cerevisiae (strain ATCC 204508 / S288c) (Baker's yeast).